A 305-amino-acid polypeptide reads, in one-letter code: Glycine--tRNA ligase alpha subunit (305 aa).

Belongs to the class-II aminoacyl-tRNA synthetase family. In terms of assembly, tetramer of two alpha and two beta subunits.

The protein resides in the cytoplasm. It carries out the reaction tRNA(Gly) + glycine + ATP = glycyl-tRNA(Gly) + AMP + diphosphate. The sequence is that of Glycine--tRNA ligase alpha subunit from Streptococcus thermophilus (strain CNRZ 1066).